The chain runs to 369 residues: 3-dehydroquinate synthase (369 aa).

Residues aspartate 78–lysine 83, glycine 112–aspartate 116, threonine 136–threonine 137, lysine 149, lysine 158, and threonine 176–threonine 179 contribute to the NAD(+) site. Zn(2+) is bound by residues glutamate 191, histidine 254, and histidine 271.

This sequence belongs to the sugar phosphate cyclases superfamily. Dehydroquinate synthase family. The cofactor is NAD(+). Co(2+) serves as cofactor. Zn(2+) is required as a cofactor.

Its subcellular location is the cytoplasm. The catalysed reaction is 7-phospho-2-dehydro-3-deoxy-D-arabino-heptonate = 3-dehydroquinate + phosphate. Its pathway is metabolic intermediate biosynthesis; chorismate biosynthesis; chorismate from D-erythrose 4-phosphate and phosphoenolpyruvate: step 2/7. Functionally, catalyzes the conversion of 3-deoxy-D-arabino-heptulosonate 7-phosphate (DAHP) to dehydroquinate (DHQ). In Nitrosomonas europaea (strain ATCC 19718 / CIP 103999 / KCTC 2705 / NBRC 14298), this protein is 3-dehydroquinate synthase.